The primary structure comprises 421 residues: Testin (421 aa).

The region spanning 92–199 (MILTNPVAAK…GDVKLPREMD (108 aa)) is the PET domain. Residues 133 to 164 (EKQPVAGSEGAQYRKKQLAKQLPAHDQDPSKC) form a disordered region. The span at 155 to 164 (PAHDQDPSKC) shows a compositional bias: basic and acidic residues. LIM zinc-binding domains are found at residues 234 to 297 (YSCY…CDSE), 299 to 359 (PRCA…NHAV), and 362 to 421 (QGCH…KMMS).

It belongs to the prickle / espinas / testin family. In terms of assembly, interacts via LIM domain 1 with ZYX. Interacts (via LIM domain 3) with ENAH and VASP. Interacts with ALKBH4, talin, actin, alpha-actinin, GRIP1 and PXN. Interacts (via LIM domain 2) with ACTL7A (via N-terminus). Heterodimer with ACTL7A; the heterodimer interacts with ENAH to form a heterotrimer.

It localises to the cytoplasm. Its subcellular location is the cell junction. The protein resides in the focal adhesion. Scaffold protein that may play a role in cell adhesion, cell spreading and in the reorganization of the actin cytoskeleton. Plays a role in the regulation of cell proliferation. May act as a tumor suppressor. In Neofelis nebulosa (Clouded leopard), this protein is Testin (TES).